The sequence spans 384 residues: ATP phosphoribosyltransferase regulatory subunit (384 aa).

This sequence belongs to the class-II aminoacyl-tRNA synthetase family. HisZ subfamily. As to quaternary structure, heteromultimer composed of HisG and HisZ subunits.

It localises to the cytoplasm. The protein operates within amino-acid biosynthesis; L-histidine biosynthesis; L-histidine from 5-phospho-alpha-D-ribose 1-diphosphate: step 1/9. In terms of biological role, required for the first step of histidine biosynthesis. May allow the feedback regulation of ATP phosphoribosyltransferase activity by histidine. This is ATP phosphoribosyltransferase regulatory subunit from Azoarcus sp. (strain BH72).